The sequence spans 525 residues: Probable protein kinase UbiB (525 aa).

Residues 118–500 form the Protein kinase domain; sequence DFERVPVASA…QKRTNRLLQG (383 aa). ATP contacts are provided by residues 124-132 and Lys150; that span reads VASASIAQV. The Proton acceptor role is filled by Asp285. A helical membrane pass occupies residues 501-521; sequence LLLFGVAVGVGAALARVFLAL.

This sequence belongs to the ABC1 family. UbiB subfamily.

The protein resides in the cell inner membrane. It participates in cofactor biosynthesis; ubiquinone biosynthesis [regulation]. Functionally, is probably a protein kinase regulator of UbiI activity which is involved in aerobic coenzyme Q (ubiquinone) biosynthesis. The chain is Probable protein kinase UbiB from Paraburkholderia xenovorans (strain LB400).